The sequence spans 215 residues: Large ribosomal subunit protein uL3c (215 aa).

Residues 132–151 (RGAMSHGSKSHRRPGSIGAG) form a disordered region.

It belongs to the universal ribosomal protein uL3 family. Part of the 50S ribosomal subunit.

Its subcellular location is the plastid. The protein resides in the chloroplast. Its function is as follows. One of the primary rRNA binding proteins, it binds directly near the 3'-end of the 23S rRNA, where it nucleates assembly of the 50S subunit. The protein is Large ribosomal subunit protein uL3c (rpl3) of Cyanidium caldarium (Red alga).